Consider the following 772-residue polypeptide: MGKRRNRGRSQMLSTMTKKQKKHLRDFGEEHPFYDRVSKKEAKPQICQLPESSDSSHSESESESEQEHVSGYHRLLATLKNVSEEEEEEEEEEEEEEEEEEEEEEEEEDDSAVGDAEMNEEAGSEDGSVGEAAVSEAAEEAAETQEHMSLADNSKEKDGEEPPGVSQKSSEEFTDVKHESLFSLETNFLEEDSGGSCSQRPSQDPFQQHVNKELKEKEIQAAASSPPATQQLKWPVLGHLVFSSKFQKTETFKPPKDIDLKLLHLQKPLESTWAKTNSQFLSGPQKSNSSFTPLQKELFLIMNSYRDLFYPERTALKNGEEVRHVYCLHAINHVLKANAQVLANNSRRRSQKLGVGEDDDFRDQGLTRPKVLIVVPFREAALRVVQLFISLLEGDSKKKIIVSNKKRFQGEYGSDPEERPPNLKRPEDYEAVFVGNIDDHFRIGVAILQRSIRLYAPFYSSDILIASPLGLRTIIGGEGEKKRDFDFLSSVELLIIDQADIYLMQNWEHVLHLMNHMNLLPLDSHGVDFSRVRMWSLNNWSKYYRQTLLFGALQDAQINSVFNKHCINAQGQVAVRNVPMTGSISHVLVQLPHVFQRMEAQDLSSVIDARFHFFINKILPQYRDAVMSHTLIYVPSYFDFVRLRNYFKKEELNFTHICEYTQKSGISRARHFFLQGEKQFLLLTERFHFYKRYTIKGIRNLIFYELPTYPHFYSEVCNMLRATSRGEEATWTCTVLYSKYDAQRLAAVVGVERAAQMLQSPKNVHLFVTGEK.

Positions 1 to 179 are disordered; the sequence is MGKRRNRGRS…SEEFTDVKHE (179 aa). Promotes p53/TP53 degradation stretches follow at residues 1-201 and 589-651; these read MGKR…SQRP and VQLP…KKEE. The residue at position 10 (Ser10) is a Phosphoserine. Residues 25–43 are compositionally biased toward basic and acidic residues; the sequence is RDFGEEHPFYDRVSKKEAK. 3 positions are modified to phosphoserine: Ser52, Ser60, and Ser64. Basic and acidic residues predominate over residues 54-70; the sequence is DSSHSESESESEQEHVS. The segment covering 84–124 has biased composition (acidic residues); sequence EEEEEEEEEEEEEEEEEEEEEEEEEDDSAVGDAEMNEEAGS. The segment covering 127-136 has biased composition (low complexity); it reads GSVGEAAVSE. A compositionally biased stretch (basic and acidic residues) spans 169-179; the sequence is SSEEFTDVKHE. Residues 652 to 713 are represses p53/TP53 degradation; it reads LNFTHICEYT…YELPTYPHFY (62 aa).

This sequence belongs to the UTP25 family. Interacts with CAPN3; the interaction is required for CAPN3 translocation to the nucleolus. Post-translationally, phosphorylated. Phosphorylation is required to promote p53/TP53 degradation in the nucleolus which promotes cell cycle progression and liver development. In terms of tissue distribution, expressed in all tissues tested: brain, small intestine, large intestine, stomach, liver, spleen, thymus, lung, kidney and testes (at protein level).

The protein resides in the nucleus. It localises to the nucleolus. Its function is as follows. Component of the ribosomal small subunit processome for the biogenesis of ribosomes, functions in pre-ribosomal RNA (pre-rRNA) processing. Essential for embryonic development in part through the regulation of p53 pathway. Controls the expansion growth of digestive organs and liver. Also involved in the sympathetic neuronal development. Mediates, with CAPN3, the proteasome-independent degradation of p53/TP53. The sequence is that of U3 small nucleolar RNA-associated protein 25 homolog from Mus musculus (Mouse).